The chain runs to 417 residues: Adenosylhomocysteinase (417 aa).

Residues Thr-53, Asp-125, and Glu-149 each contribute to the substrate site. 150–152 (TTT) provides a ligand contact to NAD(+). Positions 179 and 183 each coordinate substrate. NAD(+) is bound by residues Asn-184, 213–218 (GYGWVG), Glu-236, Asn-271, 292–294 (AGH), and Asn-339.

It belongs to the adenosylhomocysteinase family. NAD(+) is required as a cofactor.

The protein localises to the cytoplasm. It catalyses the reaction S-adenosyl-L-homocysteine + H2O = L-homocysteine + adenosine. Its pathway is amino-acid biosynthesis; L-homocysteine biosynthesis; L-homocysteine from S-adenosyl-L-homocysteine: step 1/1. May play a key role in the regulation of the intracellular concentration of adenosylhomocysteine. The protein is Adenosylhomocysteinase of Saccharolobus solfataricus (strain ATCC 35092 / DSM 1617 / JCM 11322 / P2) (Sulfolobus solfataricus).